Here is a 97-residue protein sequence, read N- to C-terminus: Early nodulin-75 (97 aa).

The interval 1–97 (RPHVHPPPEH…PEYQPPHEKP (97 aa)) is disordered. Composition is skewed to pro residues over residues 9–22 (EHQP…PEYQ) and 31–43 (VHPP…PYQK). A compositionally biased stretch (basic and acidic residues) spans 76-97 (PPHEKPPHEHPPPEYQPPHEKP).

It belongs to the nodulin 75 family.

Its function is as follows. Involved in early stages of root nodule development. This is Early nodulin-75 (ENOD2) from Medicago sativa (Alfalfa).